The chain runs to 65 residues: Transcriptional regulatory protein SenS (65 aa).

Positions 11–31 (RFRKRKTYGNQILPLELLIEK) form a DNA-binding region, H-T-H motif.

This sequence to B.natto SenN.

Regulates the expression of extracellular-protein genes of Bacillus subtilis. The chain is Transcriptional regulatory protein SenS (senS) from Bacillus subtilis (strain 168).